A 426-amino-acid polypeptide reads, in one-letter code: DNA primase DnaG (426 aa).

Residues 171-245 form the Toprim domain; sequence DTVILVEGRA…KVDFVARAPP (75 aa). Residues glutamate 177, aspartate 219, and aspartate 221 each coordinate Mg(2+). Residues 407-426 form a disordered region; sequence KSEENIQESVSTGESAQTSP. Residues 413-426 are compositionally biased toward polar residues; sequence QESVSTGESAQTSP.

This sequence belongs to the archaeal DnaG primase family. As to quaternary structure, forms a ternary complex with MCM helicase and DNA. Component of the archaeal exosome complex. Mg(2+) serves as cofactor.

It carries out the reaction ssDNA + n NTP = ssDNA/pppN(pN)n-1 hybrid + (n-1) diphosphate.. Its function is as follows. RNA polymerase that catalyzes the synthesis of short RNA molecules used as primers for DNA polymerase during DNA replication. Also part of the exosome, which is a complex involved in RNA degradation. Acts as a poly(A)-binding protein that enhances the interaction between heteromeric, adenine-rich transcripts and the exosome. This Thermofilum pendens (strain DSM 2475 / Hrk 5) protein is DNA primase DnaG.